Here is a 643-residue protein sequence, read N- to C-terminus: Ecto-NOX disulfide-thiol exchanger 1 (643 aa).

Residues 142–221 (KTVFVGGLPE…GRLHVDFAQA (80 aa)) enclose the RRM domain. Coiled-coil stretches lie at residues 307–342 (VQSA…LTGI) and 425–521 (QAYA…QLKG).

Belongs to the ENOX family. Cu cation serves as cofactor.

The protein localises to the cell membrane. The protein resides in the secreted. It localises to the extracellular space. With respect to regulation, not inhibited by the antitumor sulfonylurea LY181984, the vabilloid capsaicin, and retinoids. Functionally, probably acts as a terminal oxidase of plasma electron transport from cytosolic NAD(P)H via hydroquinones to acceptors at the cell surface. Hydroquinone oxidase activity alternates with a protein disulfide-thiol interchange/oxidoreductase activity which may control physical membrane displacements associated with vesicle budding or cell enlargement. The activities oscillate with a period length of 24 minutes and play a role in control of the ultradian cellular biological clock. In Mus musculus (Mouse), this protein is Ecto-NOX disulfide-thiol exchanger 1 (Enox1).